The sequence spans 361 residues: Mannose-1-phosphate guanyltransferase 2 (361 aa).

It belongs to the transferase hexapeptide repeat family.

The protein resides in the cytoplasm. The catalysed reaction is alpha-D-mannose 1-phosphate + GTP + H(+) = GDP-alpha-D-mannose + diphosphate. It participates in nucleotide-sugar biosynthesis; GDP-alpha-D-mannose biosynthesis; GDP-alpha-D-mannose from alpha-D-mannose 1-phosphate (GTP route): step 1/1. Involved in cell wall synthesis where it is required for glycosylation. Involved in cell cycle progression through cell-size checkpoint. This chain is Mannose-1-phosphate guanyltransferase 2 (MPG1), found in Candida glabrata (strain ATCC 2001 / BCRC 20586 / JCM 3761 / NBRC 0622 / NRRL Y-65 / CBS 138) (Yeast).